The primary structure comprises 450 residues: Phosphoglucosamine mutase (450 aa).

The active-site Phosphoserine intermediate is the Ser-100. Mg(2+) is bound by residues Ser-100, Asp-240, Asp-242, and Asp-244. Phosphoserine is present on Ser-100.

The protein belongs to the phosphohexose mutase family. Mg(2+) serves as cofactor. In terms of processing, activated by phosphorylation.

It carries out the reaction alpha-D-glucosamine 1-phosphate = D-glucosamine 6-phosphate. In terms of biological role, catalyzes the conversion of glucosamine-6-phosphate to glucosamine-1-phosphate. The chain is Phosphoglucosamine mutase from Desulforudis audaxviator (strain MP104C).